The following is a 39-amino-acid chain: Photosystem II reaction center protein Y (39 aa).

Residues 4–24 traverse the membrane as a helical segment; the sequence is RVIVVVSPLLIAATWAAINIG.

Belongs to the PsbY family. As to quaternary structure, PSII is composed of 1 copy each of membrane proteins PsbA, PsbB, PsbC, PsbD, PsbE, PsbF, PsbH, PsbI, PsbJ, PsbK, PsbL, PsbM, PsbT, PsbX, PsbY, PsbZ, Psb30/Ycf12, peripheral proteins PsbO, CyanoQ (PsbQ), PsbU, PsbV and a large number of cofactors. It forms dimeric complexes.

Its subcellular location is the cellular thylakoid membrane. Its function is as follows. Loosely associated component of the core of photosystem II (PSII), it is not always seen in crystals. PSII is a light-driven water plastoquinone oxidoreductase, using light energy to abstract electrons from H(2)O, generating a proton gradient subsequently used for ATP formation. In Synechocystis sp. (strain ATCC 27184 / PCC 6803 / Kazusa), this protein is Photosystem II reaction center protein Y.